Consider the following 391-residue polypeptide: MNLHEFQAKHLFTEAGIAIPRGYVARSSAEARAAAERLGGSAWVVKAQVHAGGRGKAGGVRVIQEGDEIERYADSLLGERLVTHQTDGRGQPIHALLVEEGLEIARELYLGALVDRASQRVVFMVSAAGGMDIEEVAASEPERIHTVRVHPAAGLQPYQCRQLGFALGLDKAQVGDLTRMMQGLYRLFLERDLSLVEINPLIVTGEGRLLALDAKVTVDDNAVEIGRQSQIQDMRDLTQEDETEVRAAEHNLNYITLDGNIGCMVNGAGLAMATMDVIKLHGGAPANFLDVGGGTNAERVAEAFKIILSSPSVEGILVNIFGGIVRCDMIAEGIVAAVQDVGVEVPVVVRLEGTNVEQGKQILADSGLDLIPADDLADAAAKIVDIAGQVA.

The region spanning Lys9–Arg246 is the ATP-grasp domain. Residues Lys46, Gly53–Gly55, Glu99, Leu102, and Glu107 each bind ATP. Mg(2+) contacts are provided by Asn199 and Asp213. Residues Asn266 and Gly323–Val325 contribute to the substrate site.

This sequence belongs to the succinate/malate CoA ligase beta subunit family. Heterotetramer of two alpha and two beta subunits. Requires Mg(2+) as cofactor.

It catalyses the reaction succinate + ATP + CoA = succinyl-CoA + ADP + phosphate. The enzyme catalyses GTP + succinate + CoA = succinyl-CoA + GDP + phosphate. It functions in the pathway carbohydrate metabolism; tricarboxylic acid cycle; succinate from succinyl-CoA (ligase route): step 1/1. Succinyl-CoA synthetase functions in the citric acid cycle (TCA), coupling the hydrolysis of succinyl-CoA to the synthesis of either ATP or GTP and thus represents the only step of substrate-level phosphorylation in the TCA. The beta subunit provides nucleotide specificity of the enzyme and binds the substrate succinate, while the binding sites for coenzyme A and phosphate are found in the alpha subunit. This is Succinate--CoA ligase [ADP-forming] subunit beta from Halorhodospira halophila (strain DSM 244 / SL1) (Ectothiorhodospira halophila (strain DSM 244 / SL1)).